Here is an 858-residue protein sequence, read N- to C-terminus: Piwi-like protein 1 (858 aa).

Positions 1-13 (MTGRARARSRGRG) are enriched in basic residues. The disordered stretch occupies residues 1 to 56 (MTGRARARSRGRGRGQEPAAPGAQPPVSQEAAKPVVSTPSEGQLVGRGRQKPAPGA). A compositionally biased stretch (low complexity) spans 16-26 (QEPAAPGAQPP). The PAZ domain occupies 276 to 388 (TVLDFMYSLR…LVPEFCYLTG (113 aa)). The interval 314 to 316 (TYR) is required for binding 2'-O-methylated 3'-end of piRNAs. Residues 476 to 612 (SKEMRGLPLI…LQMNCKMGGE (137 aa)) form an MID region region. The region spanning 552-844 (MVVVILPTNR…LAFLVGQSIH (293 aa)) is the Piwi domain. Active-site residues include aspartate 629, glutamate 667, aspartate 699, and histidine 833.

It belongs to the argonaute family. Piwi subfamily. The cofactor is Mg(2+). Post-translationally, methylated on arginine residues; required for the interaction with Tudor domain-containing protein and subsequent localization to the meiotic nuage, also named P granule. As to expression, expressed exclusively in the adult gonads; expression in the ovary weaker than in the testis (at protein level). During neurogenesis and organogenesis, expression is detected in CNS (midbrain and eye) and fin buds. Starting from 24 hours post-fertilization, expression is found in the genital ridge.

The protein resides in the cytoplasm. Plays a central role during gametogenesis by repressing transposable elements and preventing their mobilization, which is essential for the germline integrity. Acts via the piRNA metabolic process, which mediates the repression of transposable elements during meiosis by forming complexes composed of piRNAs and Piwi proteins and governs the methylation and subsequent repression of transposons. Directly binds methylated piRNAs, a class of 24 to 30 nucleotide RNAs that are generated by a Dicer-independent mechanism and are primarily derived from transposons and other repeated sequence elements. Has a strong preference for piRNAs with a uridine nucleotide at their 5'-end (g1U preference, also named 1U-bias) and binds piRNAs in an opposite direction compared to piwil2/zili. Participates in a piRNA amplification loop with piwil2/zili. Not involved in the piRNA amplification loop, also named ping-pong amplification cycle. Acts as an endoribonuclease that cleaves transposon messenger RNAs. The chain is Piwi-like protein 1 (piwil1) from Danio rerio (Zebrafish).